Here is a 351-residue protein sequence, read N- to C-terminus: Ferrochelatase (351 aa).

The Fe cation site is built by His184 and Glu265.

The protein belongs to the ferrochelatase family.

It localises to the cytoplasm. The enzyme catalyses heme b + 2 H(+) = protoporphyrin IX + Fe(2+). It participates in porphyrin-containing compound metabolism; protoheme biosynthesis; protoheme from protoporphyrin-IX: step 1/1. In terms of biological role, catalyzes the ferrous insertion into protoporphyrin IX. The polypeptide is Ferrochelatase (Rhodopirellula baltica (strain DSM 10527 / NCIMB 13988 / SH1)).